The following is a 224-amino-acid chain: Flagellar L-ring protein (224 aa).

A signal peptide spans Met-1–Ala-15. Cys-16 is lipidated: N-palmitoyl cysteine. Cys-16 carries S-diacylglycerol cysteine lipidation.

This sequence belongs to the FlgH family. In terms of assembly, the basal body constitutes a major portion of the flagellar organelle and consists of four rings (L,P,S, and M) mounted on a central rod.

The protein localises to the cell outer membrane. Its subcellular location is the bacterial flagellum basal body. Functionally, assembles around the rod to form the L-ring and probably protects the motor/basal body from shearing forces during rotation. This chain is Flagellar L-ring protein, found in Shewanella baltica (strain OS223).